Here is a 138-residue protein sequence, read N- to C-terminus: Histone H2AX (138 aa).

The disordered stretch occupies residues 1–23 (MSTTGKGGKAKGKTASSKQVSRS). Serine 2 carries the post-translational modification N-acetylserine. An N6-acetyllysine mark is found at lysine 6, lysine 9, lysine 11, lysine 13, and lysine 18. Serine 123 carries the phosphoserine modification. Residue lysine 124 forms a Glycyl lysine isopeptide (Lys-Gly) (interchain with G-Cter in ubiquitin) linkage. Phosphoserine is present on residues serine 125, serine 130, and serine 135. The short motif at 135-136 (SQ) is the [ST]-Q motif element.

Belongs to the histone H2A family. In terms of assembly, the nucleosome is a histone octamer containing two molecules each of H2A, H2B, H3 and H4 assembled in one H3-H4 heterotetramer and two H2A-H2B heterodimers. The octamer wraps approximately 147 bp of DNA. In terms of processing, monoubiquitination of Lys-124 gives a specific tag for epigenetic transcriptional repression. Post-translationally, phosphorylated to form H2AX134ph (gamma-H2AX) in response to DNA double-strand breaks (DSBs) generated by exogenous genotoxic agents in both the mitotic MIC and the amitotic MAC. Gamma-H2AX is also found when programmed DNA rearrangements occur, namely homologous recombination in the MIC during prophase of meiosis, and chromosome fragmentation and DNA elimination in developing MACs. Gamma-H2AX is important to recover from exogenous DNA damage and to repair breaks associated with normal micronuclear meiosis and mitosis and macronuclear amitotic division. Acetylation occurs almost exclusively in the MAC.

It localises to the nucleus. It is found in the chromosome. In terms of biological role, core component of nucleosome which plays a central role in DNA double strand break (DSB) repair. Nucleosomes wrap and compact DNA into chromatin, limiting DNA accessibility to the cellular machineries which require DNA as a template. Histones thereby play a central role in transcription regulation, DNA repair, DNA replication and chromosomal stability. DNA accessibility is regulated via a complex set of post-translational modifications of histones, also called histone code, and nucleosome remodeling. This chain is Histone H2AX (HTA1), found in Tetrahymena thermophila (strain SB210).